We begin with the raw amino-acid sequence, 901 residues long: Putative receptor protein kinase CRINKLY4 (901 aa).

A signal peptide spans 1-24 (MDHVPALVLAGCCFLALLPGWACG). At 25–423 (LGSMSSIAVS…SRKLMAFQMR (399 aa)) the chain is on the extracellular side. 7 tandem repeats follow at residues 33-68 (VSYG…GAPP), 72-107 (FLGL…GVPQ), 125-160 (LCAL…AVDE), 162-195 (VSTV…GVVG), 203-236 (FQSI…QVVP), 253-287 (MSTV…TSPP), and 292-330 (MYAL…AVPP). The interval 33–330 (VSYGEDGPVF…PLALPMAVPP (298 aa)) is 7 X 36 AA repeats. Asn151 and Asn179 each carry an N-linked (GlcNAc...) asparagine glycan. Asn282 is a glycosylation site (N-linked (GlcNAc...) asparagine). Disulfide bonds link Cys338/Cys365, Cys368/Cys382, and Cys372/Cys390. A TNFR-Cys repeat occupies 357–391 (CKPANSRLCLPCSTGCPEGLYESSPCNATADRVCQ). A glycan (N-linked (GlcNAc...) asparagine) is linked at Asn383. A helical membrane pass occupies residues 424–444 (IFVAEIVFAVVLVLSVSVTTC). The Cytoplasmic portion of the chain corresponds to 445 to 901 (LYVRHKLRHC…QENLYLQHNF (457 aa)). One can recognise a Protein kinase domain in the interval 505-712 (FSEDSQVGKG…EILSGRKAID (208 aa)). ATP contacts are provided by residues 511 to 519 (VGKGSFSCV) and Lys533. Residue Asp634 is the Proton acceptor of the active site. The interval 845–876 (VTSSQRRKSSASEADIVGRRATDGRNVGSSIG) is disordered.

The protein belongs to the protein kinase superfamily. Ser/Thr protein kinase family. In terms of assembly, homodimer.

It is found in the cell membrane. Its subcellular location is the endosome. The protein localises to the multivesicular body membrane. It catalyses the reaction L-seryl-[protein] + ATP = O-phospho-L-seryl-[protein] + ADP + H(+). The enzyme catalyses L-threonyl-[protein] + ATP = O-phospho-L-threonyl-[protein] + ADP + H(+). Its function is as follows. Putative receptor protein kinase. Could play a role in a differentiation signal. The CRINKLY4 (CR4) mutation affects leaf epidermis differentiation such that cell size and morphology are altered, and surface functions are compromised, allowing graft-like fusions between organs. The sequence is that of Putative receptor protein kinase CRINKLY4 (CR4) from Zea mays (Maize).